The chain runs to 406 residues: Phosphorylase b kinase gamma catalytic chain, liver/testis isoform (406 aa).

The Protein kinase domain occupies 24 to 291 (YDPKDVIGRG…AEQALQHPFF (268 aa)). Residues 30 to 38 (IGRGVSSVV) and lysine 53 contribute to the ATP site. Catalysis depends on aspartate 153, which acts as the Proton acceptor. The calmodulin-binding (domain-N) stretch occupies residues 306–330 (QRFRVAVWTVLAAGRVALSAHRIRP). Residues 346–370 (VRRLIDNCAFRLYGHWVKKGEQQNR) form a calmodulin-binding (domain-C) region.

This sequence belongs to the protein kinase superfamily. CAMK Ser/Thr protein kinase family. As to quaternary structure, hexadecamer of 4 heterotetramers, each composed of alpha, beta, gamma, and delta subunits. Alpha (PHKA1 or PHKA2) and beta (PHKB) are regulatory subunits, gamma (PHKG1 or PHKG2) is the catalytic subunit, and delta is calmodulin.

It carries out the reaction 2 ATP + phosphorylase b = 2 ADP + phosphorylase a.. In terms of biological role, catalytic subunit of the phosphorylase b kinase (PHK), which mediates the neural and hormonal regulation of glycogen breakdown (glycogenolysis) by phosphorylating and thereby activating glycogen phosphorylase. May regulate glycogeneolysis in the testis. In vitro, phosphorylates PYGM. The chain is Phosphorylase b kinase gamma catalytic chain, liver/testis isoform (PHKG2) from Bos taurus (Bovine).